The sequence spans 399 residues: Succinate--CoA ligase [ADP-forming] subunit beta (399 aa).

In terms of domain architecture, ATP-grasp spans 9 to 254 (KELLAKFGVA…ETEEDPAEIE (246 aa)). ATP-binding positions include lysine 46, 53–55 (GRG), alanine 112, and glutamate 117. Mg(2+)-binding residues include asparagine 209 and aspartate 223. Residues asparagine 274 and 331-333 (GIM) contribute to the substrate site.

The protein belongs to the succinate/malate CoA ligase beta subunit family. In terms of assembly, heterotetramer of two alpha and two beta subunits. Mg(2+) serves as cofactor.

It catalyses the reaction succinate + ATP + CoA = succinyl-CoA + ADP + phosphate. The catalysed reaction is GTP + succinate + CoA = succinyl-CoA + GDP + phosphate. It participates in carbohydrate metabolism; tricarboxylic acid cycle; succinate from succinyl-CoA (ligase route): step 1/1. In terms of biological role, succinyl-CoA synthetase functions in the citric acid cycle (TCA), coupling the hydrolysis of succinyl-CoA to the synthesis of either ATP or GTP and thus represents the only step of substrate-level phosphorylation in the TCA. The beta subunit provides nucleotide specificity of the enzyme and binds the substrate succinate, while the binding sites for coenzyme A and phosphate are found in the alpha subunit. The polypeptide is Succinate--CoA ligase [ADP-forming] subunit beta (Rhizorhabdus wittichii (strain DSM 6014 / CCUG 31198 / JCM 15750 / NBRC 105917 / EY 4224 / RW1) (Sphingomonas wittichii)).